We begin with the raw amino-acid sequence, 120 residues long: NAD(P)H-quinone oxidoreductase subunit 3, chloroplastic (120 aa).

Helical transmembrane passes span 9 to 29, 64 to 84, and 88 to 108; these read IFWAFLIISSVIPILAFLFSG, MFALVFVVFDVETVFLYPWAM, and ILGVSVFIEALIFVLILIVGL.

It belongs to the complex I subunit 3 family. NDH is composed of at least 16 different subunits, 5 of which are encoded in the nucleus.

It is found in the plastid. The protein resides in the chloroplast thylakoid membrane. It carries out the reaction a plastoquinone + NADH + (n+1) H(+)(in) = a plastoquinol + NAD(+) + n H(+)(out). The enzyme catalyses a plastoquinone + NADPH + (n+1) H(+)(in) = a plastoquinol + NADP(+) + n H(+)(out). NDH shuttles electrons from NAD(P)H:plastoquinone, via FMN and iron-sulfur (Fe-S) centers, to quinones in the photosynthetic chain and possibly in a chloroplast respiratory chain. The immediate electron acceptor for the enzyme in this species is believed to be plastoquinone. Couples the redox reaction to proton translocation, and thus conserves the redox energy in a proton gradient. The sequence is that of NAD(P)H-quinone oxidoreductase subunit 3, chloroplastic from Spinacia oleracea (Spinach).